Here is a 150-residue protein sequence, read N- to C-terminus: MTDVTETEVVTESAEPREPVIIDRPIQTVGRRKEAVVRVRLVPGTGQFNLDGRTLENYFPNKVHQQLIKAPLVTVDRVDQFDIYAHLDGGGPSGQAGALRLAIARALILVQPEDRPALKKAGFLTRDPRAIERKKYGLKKARKAPQYSKR.

The protein belongs to the universal ribosomal protein uS9 family.

In Mycolicibacterium smegmatis (strain ATCC 700084 / mc(2)155) (Mycobacterium smegmatis), this protein is Small ribosomal subunit protein uS9.